The primary structure comprises 408 residues: CCA-adding enzyme (408 aa).

Residues Gly8 and Arg11 each contribute to the ATP site. CTP-binding residues include Gly8 and Arg11. The Mg(2+) site is built by Glu21 and Asp23. Arg91, Arg137, and Arg140 together coordinate ATP. Positions 91, 137, and 140 each coordinate CTP. The region spanning 226-329 (TGYYTMTTLS…MTLFHVFDCW (104 aa)) is the HD domain.

Belongs to the tRNA nucleotidyltransferase/poly(A) polymerase family. Bacterial CCA-adding enzyme type 2 subfamily. Mg(2+) serves as cofactor.

It catalyses the reaction a tRNA precursor + 2 CTP + ATP = a tRNA with a 3' CCA end + 3 diphosphate. The enzyme catalyses a tRNA with a 3' CCA end + 2 CTP + ATP = a tRNA with a 3' CCACCA end + 3 diphosphate. Catalyzes the addition and repair of the essential 3'-terminal CCA sequence in tRNAs without using a nucleic acid template. Adds these three nucleotides in the order of C, C, and A to the tRNA nucleotide-73, using CTP and ATP as substrates and producing inorganic pyrophosphate. tRNA 3'-terminal CCA addition is required both for tRNA processing and repair. Also involved in tRNA surveillance by mediating tandem CCA addition to generate a CCACCA at the 3' terminus of unstable tRNAs. While stable tRNAs receive only 3'-terminal CCA, unstable tRNAs are marked with CCACCA and rapidly degraded. This is CCA-adding enzyme from Blochmanniella pennsylvanica (strain BPEN).